Reading from the N-terminus, the 322-residue chain is Aldo-keto reductase family 1 member C23 (322 aa).

20-24 provides a ligand contact to NADP(+); sequence GFGTY. Residue lysine 31 coordinates substrate. Residue aspartate 50 participates in NADP(+) binding. Tyrosine 55 acts as the Proton donor in catalysis. Histidine 117 lines the substrate pocket. Residues 166–167, glutamine 190, 216–221, and 269–279 each bind NADP(+); these read SN, YSALGS, and KSYNEKRIKEN.

It belongs to the aldo/keto reductase family. As to quaternary structure, monomer. In terms of tissue distribution, detected in follicle granulosa cells (at protein level). Detected in heart, lung, liver, kidney, stomach, uterus, testis, skeletal muscle and granulosa cells of the follicle wall.

Its subcellular location is the cytoplasm. Its function is as follows. NADP-dependent oxidoreductase that has 20-alpha-hydroxysteroid dehydrogenase activity. The protein is Aldo-keto reductase family 1 member C23 (AKR1C23) of Equus caballus (Horse).